A 379-amino-acid chain; its full sequence is Cytochrome b (379 aa).

The next 4 membrane-spanning stretches (helical) occupy residues 33 to 53, 77 to 98, 113 to 133, and 178 to 198; these read FGSLLGMCLMIQILTGLFLAM, WLIRYLHANGASMFFICLFIHV, WNIGIILFLTTMATAFVGYVL, and FFAFHFILPFIITAFALVHLL. 2 residues coordinate heme b: His-83 and His-97. Heme b contacts are provided by His-182 and His-196. A ubiquinone is bound at residue His-201. The next 4 membrane-spanning stretches (helical) occupy residues 226–246, 288–308, 320–340, and 347–367; these read TKDLLGIFLLLLVLMILALFF, LGGVLALVLSILILAAFPLLN, ITQVIYWIFIANLLVLTWIGG, and FTMIGQIASITYFAIIIILIP.

It belongs to the cytochrome b family. In terms of assembly, the cytochrome bc1 complex contains 11 subunits: 3 respiratory subunits (MT-CYB, CYC1 and UQCRFS1), 2 core proteins (UQCRC1 and UQCRC2) and 6 low-molecular weight proteins (UQCRH/QCR6, UQCRB/QCR7, UQCRQ/QCR8, UQCR10/QCR9, UQCR11/QCR10 and a cleavage product of UQCRFS1). This cytochrome bc1 complex then forms a dimer. The cofactor is heme b.

The protein resides in the mitochondrion inner membrane. Its function is as follows. Component of the ubiquinol-cytochrome c reductase complex (complex III or cytochrome b-c1 complex) that is part of the mitochondrial respiratory chain. The b-c1 complex mediates electron transfer from ubiquinol to cytochrome c. Contributes to the generation of a proton gradient across the mitochondrial membrane that is then used for ATP synthesis. The sequence is that of Cytochrome b (MT-CYB) from Akodon spegazzinii (Spegazzini's grass mouse).